A 1582-amino-acid chain; its full sequence is ATP-binding cassette sub-family C member 8 (1582 aa).

The Extracellular portion of the chain corresponds to M1–A30. The cysteines at positions 6 and 26 are disulfide-linked. N-linked (GlcNAc...) asparagine glycosylation is present at N10. Residues L31 to L47 traverse the membrane as a helical segment. Over F48–N72 the chain is Cytoplasmic. A helical membrane pass occupies residues L73–I89. Residues A90–L106 lie on the Extracellular side of the membrane. Residues Y107–Y123 form a helical membrane-spanning segment. Over Y124–L136 the chain is Cytoplasmic. A helical membrane pass occupies residues I137–K153. At F154–F169 the chain is on the extracellular side. The chain crosses the membrane as a helical span at residues C170–E186. Residues V187–S303 are Cytoplasmic-facing. The 304-residue stretch at L299–K602 folds into the ABC transmembrane type-1 1 domain. The chain crosses the membrane as a helical span at residues T304–C319. The Extracellular portion of the chain corresponds to I320 to Y356. The chain crosses the membrane as a helical span at residues V357–F372. The Cytoplasmic segment spans residues L373–L438. The helical transmembrane segment at W439–Y454 threads the bilayer. At I455–A460 the chain is on the extracellular side. A helical membrane pass occupies residues L461–V473. Over Q474–S541 the chain is Cytoplasmic. A helical membrane pass occupies residues I542 to I557. The Extracellular segment spans residues T558–A576. A helical membrane pass occupies residues F577 to L592. Over L593–L1013 the chain is Cytoplasmic. The ABC transporter 1 domain maps to V679–T930. Residues W688, G716, S720, and S721 each contribute to the ATP site. S720 contributes to the Mg(2+) binding site. The segment at S741–S766 is disordered. Position 775 (Q775) interacts with Mg(2+). A compositionally biased stretch (basic and acidic residues) spans L939–S950. The segment at L939 to S962 is disordered. An ABC transmembrane type-1 2 domain is found at L1013–I1307. Residues S1014–D1031 traverse the membrane as a helical segment. Over Y1032–V1067 the chain is Extracellular. N1050 carries N-linked (GlcNAc...) asparagine glycosylation. The chain crosses the membrane as a helical span at residues F1068–V1084. At T1085 to L1143 the chain is on the cytoplasmic side. A helical transmembrane segment spans residues S1144–T1161. A topological domain (extracellular) is located at residue P1162. The chain crosses the membrane as a helical span at residues V1163–C1175. At Y1176–E1249 the chain is on the cytoplasmic side. A helical transmembrane segment spans residues V1250–A1265. Topologically, residues T1266–V1281 are extracellular. Residues G1282–W1297 form a helical membrane-spanning segment. At M1298 to K1582 the chain is on the cytoplasmic side. Positions I1345–R1579 constitute an ABC transporter 2 domain. The ADP site is built by T1381, G1382, G1384, K1385, S1386, and S1387. S1483 serves as a coordination point for ATP.

It belongs to the ABC transporter superfamily. ABCC family. Conjugate transporter (TC 3.A.1.208) subfamily. As to quaternary structure, forms an heterooctamer with KCNJ11; four ABCC8/SUR1 molecules interact with one KCNJ11 homotetramer.

Its subcellular location is the cell membrane. With respect to regulation, KATP channels are regulated by cytoplasmic ATP/ADP ratios; ATP inhibits the channel by closing the pore, while ADP activates the channel. Activated by phosphatidylinositol 4,5-biphosphate (PtdIns(4,5)P2). Functionally, regulator subunit of pancreatic ATP-sensitive potassium channel (KATP), playing a major role in the regulation of insulin release. In pancreatic cells, it forms KATP channels with KCNJ11; KCNJ11 forms the channel pore while ABCC8 is required for activation and regulation. The chain is ATP-binding cassette sub-family C member 8 (ABCC8) from Cricetus cricetus (Black-bellied hamster).